Here is a 652-residue protein sequence, read N- to C-terminus: MFEIKHRDAMGRIGKLKINGKIIETPTIMPVVHPNPKKQTVSIEKIEKLASVIITNSYIINTNPELKKIAEEKGIHNLIGFDKVIVTDSGSFQLSVYGEITVEPEEIIEFQEKIGVDVGTILDIPTAPYVQREQAEEELKETLRRAELSVKLRDEKNYKLLLNGTIQGSTYMDLRQESAKKMKELDFDIYPIGAVVPLMENYDYAQVIEIILNSKKELPTNKPVHLFGCGHPMMFALSVALGCDLFDSAAYALYAKDGRYLTESGTLHLEDLKDLEKFPCSCPVCIEYTPKELAKMEKRKRTELLAEHNLYITFEEINRIKQAIKDGNLWELVEERCRAHPKLLEAYRKALEYNEFIEEFDPITKKSAFFYGGYESLYRPEIIRHKKRLERIKSDNIYITTISNDINRPYSENTNMMDSDALVLIKDDLFGLVPLSIDTVYPLSQCDNPKLYCYEKIHNNEFVEEFKQNNKDKIMDITSYNYYINHYTSNANKNKVGSDAIRINNMIQYQYGFKLNDEELKKLIIKRSKKTNRIRNVLIPTDGNNKEVLFTLRSNDNLLIPAKEGAKLIHEKLPFPKYRVVIDSEVEEFARDGKSVFSKFVINCDKELRPYEEVIIVNENDELLAYGTTLLNGKELGEFNYGAAVSVRSGFK.

Catalysis depends on aspartate 88, which acts as the Nucleophile. Residues aspartate 123 and alanine 194 each contribute to the substrate site. The Zn(2+) site is built by cysteine 280, cysteine 282, and cysteine 285. The region spanning 577–652 is the PUA domain; sequence KYRVVIDSEV…AAVSVRSGFK (76 aa).

The protein belongs to the archaeosine tRNA-ribosyltransferase family. Zn(2+) is required as a cofactor.

It carries out the reaction guanosine(15) in tRNA + 7-cyano-7-deazaguanine = 7-cyano-7-carbaguanosine(15) in tRNA + guanine. The protein operates within tRNA modification; archaeosine-tRNA biosynthesis. Exchanges the guanine residue with 7-cyano-7-deazaguanine (preQ0) at position 15 in the dihydrouridine loop (D-loop) of archaeal tRNAs. The sequence is that of tRNA-guanine(15) transglycosylase from Methanococcus aeolicus (strain ATCC BAA-1280 / DSM 17508 / OCM 812 / Nankai-3).